Reading from the N-terminus, the 355-residue chain is Alpha-N-acetylneuraminide alpha-2,8-sialyltransferase (355 aa).

Residues 1-28 (MSPCGRALHTSRGAMAMLARKFPRTRLP) lie on the Cytoplasmic side of the membrane. The helical; Signal-anchor for type II membrane protein transmembrane segment at 29–47 (VGASALCVVVLCWLYIFPV) threads the bilayer. Over 48–355 (YRLPNEKEIV…CEEPSPQPTS (308 aa)) the chain is Lumenal. Residues N70 and N118 are each glycosylated (N-linked (GlcNAc...) asparagine). 2 disulfides stabilise this stretch: C137-C286 and C151-C346. CMP-N-acetyl-beta-neuraminate is bound by residues N142 and N165. N213 and N244 each carry an N-linked (GlcNAc...) asparagine glycan. CMP-N-acetyl-beta-neuraminate is bound by residues S273, T274, G275, W295, and H309. H321 (proton donor/acceptor) is an active-site residue.

Belongs to the glycosyltransferase 29 family.

The protein resides in the golgi apparatus membrane. The catalysed reaction is an N-acetyl-alpha-neuraminyl-(2-&gt;3)-beta-D-galactosyl derivative + CMP-N-acetyl-beta-neuraminate = an N-acetyl-alpha-neuraminyl-(2-&gt;8)-N-acetyl-alpha-neuraminyl-(2-&gt;3)-beta-D-galactosyl derivative + CMP + H(+). The enzyme catalyses a ganglioside GM3 (d18:1(4E)) + CMP-N-acetyl-beta-neuraminate = a ganglioside GD3 (d18:1(4E)) + CMP + H(+). It catalyses the reaction a ganglioside GD3 (d18:1(4E)) + CMP-N-acetyl-beta-neuraminate = a ganglioside GT3 (d18:1(4E)) + CMP + H(+). It carries out the reaction a ganglioside GD1a (d18:1(4E)) + CMP-N-acetyl-beta-neuraminate = a ganglioside GT1a (d18:1(4E)) + CMP + H(+). The catalysed reaction is a ganglioside GT1b (d18:1(4E)) + CMP-N-acetyl-beta-neuraminate = a ganglioside GQ1b (d18:1(4E)) + CMP + H(+). The enzyme catalyses a ganglioside GM1b (d18:1(4E)) + CMP-N-acetyl-beta-neuraminate = a ganglioside GD1c (d18:1(4E)) + CMP + H(+). It catalyses the reaction a ganglioside GD3 + CMP-N-acetyl-beta-neuraminate = a ganglioside GT3 + CMP + H(+). It carries out the reaction [alpha-N-acetylneuraminyl-(2-&gt;8)](n)-alpha-N-acetylneuraminyl-(2-&gt;8)-alpha-N-acetylneuraminyl-(2-&gt;3)-beta-D-galactosyl-(1-&gt;4)-beta-D-glucosyl-(1&lt;-&gt;1)-ceramide + CMP-N-acetyl-beta-neuraminate = [alpha-N-acetylneuraminyl-(2-&gt;8)](n+1)-alpha-N-acetylneuraminyl-(2-&gt;8)-alpha-N-acetylneuraminyl-(2-&gt;3)-beta-D-galactosyl-(1-&gt;4)-beta-D-glucosyl-(1&lt;-&gt;1)-ceramide + CMP + H(+). It functions in the pathway protein modification; protein glycosylation. Its pathway is lipid metabolism; sphingolipid metabolism. Its function is as follows. Catalyzes the addition of sialic acid in alpha 2,8-linkage to the sialic acid moiety of the ganglioside GM3 to form ganglioside GD3; gangliosides are a subfamily of complex glycosphingolipds that contain one or more residues of sialic acid. Can catalyze the addition of a second alpha-2,8- sialic acid to GD3 to form GT3. Can use GM1b, GD1a and GT1b as acceptor substrates to synthesize GD1c, GT1a and GQ1b respectively. This chain is Alpha-N-acetylneuraminide alpha-2,8-sialyltransferase, found in Mus musculus (Mouse).